The following is a 413-amino-acid chain: Serine/threonine-protein phosphatase 2A 55 kDa regulatory subunit B beta isoform (413 aa).

WD repeat units lie at residues 1–31, 57–98, 141–179, and 190–230; these read EFNH…KNQV, EIEE…KRPE, AHTY…QSFN, and ELTE…LCDR. The residue at position 245 (serine 245) is a Phosphoserine. 3 WD repeats span residues 249–287, 304–345, and 380–412; these read EIIS…RPIE, ENDC…DVTL, and DFSK…QDKV. Tyrosine 265 carries the post-translational modification Phosphotyrosine. Phosphothreonine is present on threonine 268.

It belongs to the phosphatase 2A regulatory subunit B family. As to quaternary structure, PP2A consists of a common heterodimeric core enzyme, composed of a 36 kDa catalytic subunit (subunit C) and a 65 kDa constant regulatory subunit (PR65 or subunit A), that associates with a variety of regulatory subunits. Proteins that associate with the core dimer include three families of regulatory subunits B (the R2/B/PR55/B55, R3/B''/PR72/PR130/PR59 and R5/B'/B56 families), the 48 kDa variable regulatory subunit, viral proteins, and cell signaling molecules. Interacts with TOMM22. Interacts with IER5 (via N- and C-terminal regions). In terms of tissue distribution, brain.

It localises to the cytoplasm. The protein resides in the cytoskeleton. It is found in the membrane. The B regulatory subunit might modulate substrate selectivity and catalytic activity, and might also direct the localization of the catalytic enzyme to a particular subcellular compartment. The sequence is that of Serine/threonine-protein phosphatase 2A 55 kDa regulatory subunit B beta isoform (PPP2R2B) from Oryctolagus cuniculus (Rabbit).